Consider the following 549-residue polypeptide: Probable protein kinase UbiB (549 aa).

A Protein kinase domain is found at 123 to 501 (DFNETPLASA…QQQAHKSNYL (379 aa)). ATP-binding positions include 129–137 (LASASISQV) and Lys152. The active-site Proton acceptor is Asp287. Transmembrane regions (helical) follow at residues 496–516 (HKSN…TLLI) and 520–540 (ATLW…FVGW).

This sequence belongs to the ABC1 family. UbiB subfamily.

The protein resides in the cell inner membrane. The protein operates within cofactor biosynthesis; ubiquinone biosynthesis [regulation]. In terms of biological role, is probably a protein kinase regulator of UbiI activity which is involved in aerobic coenzyme Q (ubiquinone) biosynthesis. The polypeptide is Probable protein kinase UbiB (Shewanella baltica (strain OS185)).